We begin with the raw amino-acid sequence, 727 residues long: Engulfment and cell motility protein 1 (727 aa).

Tyr18 is subject to Phosphotyrosine; by HCK. An N6-acetyllysine mark is found at Lys100 and Lys105. Position 216 is a phosphotyrosine; by HCK (Tyr216). An ELMO domain is found at 319–492 (AQRDIIFELR…VVKEQVMRAL (174 aa)). Phosphoserine is present on Ser344. Residues Tyr395 and Tyr511 each carry the phosphotyrosine; by HCK modification. The region spanning 555-676 (RLVEGTCFRK…DGLNALLGKD (122 aa)) is the PH domain. An SH3-binding motif is present at residues 707–714 (PDAPPPIP). Tyr720 carries the post-translational modification Phosphotyrosine; by HCK.

Interacts with ADGRB1. Interacts directly with the SH3-domain of DOCK1 via its SH3-binding site. Part of a complex with DOCK1 and RAC1. Part of a complex with DOCK1 and CRK isoform CRK-II. Interacts with PLEKHG6. Interacts with HCK (via SH3 domain). Interacts with ADGRB3. Interacts with DOCK5. Post-translationally, phosphorylated by HCK. As to expression, widely expressed, with a higher expression in the spleen and placenta.

The protein resides in the cytoplasm. It localises to the cell membrane. Its function is as follows. Involved in cytoskeletal rearrangements required for phagocytosis of apoptotic cells and cell motility. Acts in association with DOCK1 and CRK. Was initially proposed to be required in complex with DOCK1 to activate Rac Rho small GTPases. May enhance the guanine nucleotide exchange factor (GEF) activity of DOCK1. This is Engulfment and cell motility protein 1 (ELMO1) from Homo sapiens (Human).